A 487-amino-acid chain; its full sequence is Iron-sulfur cluster assembly SufBD family protein ycf24 (487 aa).

The protein belongs to the iron-sulfur cluster assembly SufBD family.

Its subcellular location is the plastid. The protein localises to the chloroplast. The sequence is that of Iron-sulfur cluster assembly SufBD family protein ycf24 (ycf24) from Pyropia yezoensis (Susabi-nori).